A 97-amino-acid polypeptide reads, in one-letter code: Conotoxin Cal6.1e (97 aa).

Positions 1–22 are cleaved as a signal peptide; the sequence is MKLTTVLIVAVLVLAACQFTVT. The interval 23-49 is disordered; it reads DNSGDDTENPSLRSAGENQNPDSTKTI. A propeptide spanning residues 23-60 is cleaved from the precursor; it reads DNSGDDTENPSLRSAGENQNPDSTKTITARATRARTNM. Polar residues predominate over residues 31–45; that stretch reads NPSLRSAGENQNPDS. 3 disulfides stabilise this stretch: Cys71-Cys87, Cys78-Cys91, and Cys86-Cys96.

Belongs to the conotoxin O1 superfamily. In terms of tissue distribution, expressed by the venom duct.

The protein localises to the secreted. Its function is as follows. Probable neurotoxin with unknown target. Possibly targets ion channels. The chain is Conotoxin Cal6.1e from Californiconus californicus (California cone).